The following is a 460-amino-acid chain: 3-isopropylmalate dehydratase large subunit (460 aa).

[4Fe-4S] cluster contacts are provided by cysteine 338, cysteine 398, and cysteine 401.

This sequence belongs to the aconitase/IPM isomerase family. LeuC type 1 subfamily. As to quaternary structure, heterodimer of LeuC and LeuD. It depends on [4Fe-4S] cluster as a cofactor.

The enzyme catalyses (2R,3S)-3-isopropylmalate = (2S)-2-isopropylmalate. The protein operates within amino-acid biosynthesis; L-leucine biosynthesis; L-leucine from 3-methyl-2-oxobutanoate: step 2/4. Its function is as follows. Catalyzes the isomerization between 2-isopropylmalate and 3-isopropylmalate, via the formation of 2-isopropylmaleate. The protein is 3-isopropylmalate dehydratase large subunit of Streptococcus thermophilus (strain ATCC BAA-491 / LMD-9).